The following is a 423-amino-acid chain: Myb-like protein G (423 aa).

The region spanning 36–90 is the HTH myb-type domain; it reads TISKQRENWTDEEHQKFLEALTLFDRDWKKIESFVGSKTVIQIRSHAQKYFIKVQ. The H-T-H motif DNA-binding region spans 63–86; sequence WKKIESFVGSKTVIQIRSHAQKYF. Disordered regions lie at residues 93-116, 177-205, and 284-372; these read NTGE…QKQK, QQAV…GTTL, and ISPR…LGNY. Over residues 177–202 the composition is skewed to low complexity; the sequence is QQAVTTAQSSQRNGGLPPNPSSNNGG. Polar residues predominate over residues 286 to 295; the sequence is PRNSTGNINV. Residues 302–354 show a composition bias toward low complexity; sequence NNSNNNNNNNNNNNNNNNNNNNNNNNNNNNNNNNNNNNNNNNNNNNNNNNNNN. The span at 361 to 372 shows a compositional bias: polar residues; that stretch reads QNHSNMVNLGNY.

The protein localises to the nucleus. This chain is Myb-like protein G (mybG), found in Dictyostelium discoideum (Social amoeba).